A 582-amino-acid polypeptide reads, in one-letter code: Zinc finger protein somi-1 (582 aa).

Disordered regions lie at residues leucine 179–aspartate 251 and serine 352–glutamine 377. Residues threonine 188 to asparagine 226 show a composition bias toward polar residues. Low complexity predominate over residues serine 227–glycine 244. The segment covering serine 352–serine 368 has biased composition (basic and acidic residues). The C2H2-type; Degenerate zinc finger occupies tyrosine 454–histidine 477. The tract at residues alanine 513 to leucine 582 is disordered. Residues leucine 551 to asparagine 570 are compositionally biased toward low complexity. Residues glutamine 572–leucine 582 show a composition bias toward pro residues.

As to quaternary structure, may interact with swsn-9; the interaction promotes hypodermal differentiation. In terms of tissue distribution, expressed in hypodermal seam cells, the somatic gonad and vulval precursor cells, body wall muscle and head neurons.

The protein resides in the nucleus. Its function is as follows. DNA-binding protein which binds to the promoters of let-60, lin-14 and lin-28, possibly to regulate genes involved in hypodermal and vulval development. Together with miRNAs mir-84 and let-7 may direct terminal differentiation of the seam cells, exit from the molting cycle, and vulva formation. Does not regulate the expression of mir-84. May promote hypodermal differentiation in association with swsn-9, a component of SWI/SNF chromatin remodeling complexes. The sequence is that of Zinc finger protein somi-1 from Caenorhabditis elegans.